We begin with the raw amino-acid sequence, 292 residues long: Ribosomal RNA small subunit methyltransferase A (292 aa).

S-adenosyl-L-methionine contacts are provided by N29, L31, G56, E77, D102, and N127.

The protein belongs to the class I-like SAM-binding methyltransferase superfamily. rRNA adenine N(6)-methyltransferase family. RsmA subfamily.

The protein localises to the cytoplasm. It carries out the reaction adenosine(1518)/adenosine(1519) in 16S rRNA + 4 S-adenosyl-L-methionine = N(6)-dimethyladenosine(1518)/N(6)-dimethyladenosine(1519) in 16S rRNA + 4 S-adenosyl-L-homocysteine + 4 H(+). In terms of biological role, specifically dimethylates two adjacent adenosines (A1518 and A1519) in the loop of a conserved hairpin near the 3'-end of 16S rRNA in the 30S particle. May play a critical role in biogenesis of 30S subunits. The sequence is that of Ribosomal RNA small subunit methyltransferase A from Bacillus subtilis (strain 168).